Consider the following 91-residue polypeptide: UPF0147 protein DKAM_0139 (91 aa).

It belongs to the UPF0147 family.

The polypeptide is UPF0147 protein DKAM_0139 (Desulfurococcus amylolyticus (strain DSM 18924 / JCM 16383 / VKM B-2413 / 1221n) (Desulfurococcus kamchatkensis)).